A 57-amino-acid chain; its full sequence is Large ribosomal subunit protein bL32 (57 aa).

It belongs to the bacterial ribosomal protein bL32 family.

This chain is Large ribosomal subunit protein bL32, found in Geobacillus sp. (strain WCH70).